The following is a 409-amino-acid chain: MTRFTTTLVAALAGANLAAAKCSYKWRAHAGDTCDSLSSDWSVQVSDFIKWNPSVGANCSNGVTAGQEYCVEDNGAGSKPTTPPTGSPTTLTTAVTTASSTPTQPTDGAPSPIQDGVAKDCKSAHSCKAWYKVQAGDTCDKIVSKYGAFSTDDFLKWNPAAGSDCTGLWVDYYVCVGVAGTPTSPTGSNPSKPSSTQAGVAKDCQKWYKVKSGDTCDKIKNQFNTFSLDDFLKWNPAAGKDCSGLWVDYFVCVGVPGTPTSPTGSDPSKPSPTQDGLTDKCTKFYKAQKGDTCQKIVDSLRTFTVSEFTSWNPAVGKDCTGIWVDYYYCIAVPGTPANPGPVRPSPVQDGITSKCNKYYKVQSGDYCDKIINKYNKAFNLEQLVSWNPAIGKDCSHLFVDFYICVGVQG.

A signal peptide spans 1-20 (MTRFTTTLVAALAGANLAAA). Residues 24–71 (YKWRAHAGDTCDSLSSDWSVQVSDFIKWNPSVGANCSNGVTAGQEYCV) enclose the LysM 1 domain. The N-linked (GlcNAc...) asparagine glycan is linked to Asn58. The tract at residues 74–111 (NGAGSKPTTPPTGSPTTLTTAVTTASSTPTQPTDGAPS) is disordered. Residues 87-106 (SPTTLTTAVTTASSTPTQPT) are compositionally biased toward low complexity. 4 consecutive LysM domains span residues 129–176 (AWYK…YVCV), 206–253 (KWYK…FVCV), 283–330 (KFYK…YYCI), and 357–405 (KYYK…YICV).

It belongs to the secreted LysM effector family.

It is found in the secreted. The protein resides in the cell wall. Functionally, secreted effector that enables the plant pathogenic fungus to manipulate host defenses for successful infection. Required for the full virulence to infect insect hosts. In contrast to Blys5, Blys2 is not able to protect fungal hyphae against the hydrolytic activity of chitinase but plays an important role in evasion of insect immunities. Binds chitin. Coats and protects the cell walls of insect pathogens from host cell recognition. The polypeptide is Secreted LysM effector Blys2 (Beauveria bassiana (strain ARSEF 2860) (White muscardine disease fungus)).